The primary structure comprises 183 residues: Adenine phosphoribosyltransferase (183 aa).

The protein belongs to the purine/pyrimidine phosphoribosyltransferase family. Homodimer.

The protein resides in the cytoplasm. It carries out the reaction AMP + diphosphate = 5-phospho-alpha-D-ribose 1-diphosphate + adenine. It functions in the pathway purine metabolism; AMP biosynthesis via salvage pathway; AMP from adenine: step 1/1. Its function is as follows. Catalyzes a salvage reaction resulting in the formation of AMP, that is energically less costly than de novo synthesis. The sequence is that of Adenine phosphoribosyltransferase from Klebsiella pneumoniae (strain 342).